Reading from the N-terminus, the 425-residue chain is Cyanogenic beta-glucosidase (425 aa).

A signal peptide spans 1–11 (LLSITTTHIHA). Residues glutamine 44, histidine 148, and 193–194 (NE) each bind a beta-D-glucoside. The active-site Proton donor is the glutamate 194. An intrachain disulfide couples cysteine 213 to cysteine 221. Asparagine 220 carries an N-linked (GlcNAc...) asparagine glycan. A beta-D-glucoside is bound by residues tyrosine 337 and glutamate 408. Glutamate 408 functions as the Nucleophile in the catalytic mechanism. Asparagine 412 is a glycosylation site (N-linked (GlcNAc...) asparagine).

The protein belongs to the glycosyl hydrolase 1 family. Homodimer. In terms of tissue distribution, leaves.

It carries out the reaction Hydrolysis of terminal, non-reducing beta-D-glucosyl residues with release of beta-D-glucose.. Its function is as follows. Hydrolyzes cyanoglucosides, contributing to the release of hydrocyanic acid, which functions as a defense mechanism against small predators, when the leaf tissue is damaged. The protein is Cyanogenic beta-glucosidase (LI) of Trifolium repens (Creeping white clover).